Consider the following 854-residue polypeptide: Putative COX1/OXI3 intron 2 protein (854 aa).

The Reverse transcriptase domain occupies 329–613 (LSKDINTNMF…EGVSFLGYDV (285 aa)).

The protein resides in the mitochondrion. This chain is Putative COX1/OXI3 intron 2 protein (AI2), found in Saccharomyces cerevisiae (strain ATCC 204508 / S288c) (Baker's yeast).